The chain runs to 663 residues: Rho GTPase-activating protein 18 (663 aa).

Residues 15-37 (YHPSGKDQTVGNSHAKAGEEATS) are disordered. A phosphoserine mark is found at serine 66 and serine 69. Residue threonine 158 is modified to Phosphothreonine. Disordered stretches follow at residues 179–227 (RESK…PAPE) and 243–277 (QKESSKEKIQKSKGDDATLPSFRLPKDKTGTTRIG). 2 stretches are compositionally biased toward basic and acidic residues: residues 197–219 (NENKYQGRDDEASNLVGEEKLIP) and 245–258 (ESSKEKIQKSKGDD). Serine 263 bears the Phosphoserine mark. The region spanning 324 to 523 (VPLTALLEQD…LLIKYQKLLW (200 aa)) is the Rho-GAP domain. Serine 610 is modified (phosphoserine).

As to quaternary structure, interacts with MPHOSPH6.

The protein localises to the cytoplasm. In terms of biological role, rho GTPase activating protein that suppresses F-actin polymerization by inhibiting Rho. Rho GTPase activating proteins act by converting Rho-type GTPases to an inactive GDP-bound state. Plays a key role in tissue tension and 3D tissue shape by regulating cortical actomyosin network formation. Acts downstream of YAP1 and inhibits actin polymerization, which in turn reduces nuclear localization of YAP1. Regulates cell shape, spreading, and migration. The protein is Rho GTPase-activating protein 18 of Homo sapiens (Human).